A 471-amino-acid chain; its full sequence is ATP synthase subunit beta (471 aa).

An ATP-binding site is contributed by 157–164 (GGAGVGKT).

Belongs to the ATPase alpha/beta chains family. In terms of assembly, F-type ATPases have 2 components, CF(1) - the catalytic core - and CF(0) - the membrane proton channel. CF(1) has five subunits: alpha(3), beta(3), gamma(1), delta(1), epsilon(1). CF(0) has three main subunits: a(1), b(2) and c(9-12). The alpha and beta chains form an alternating ring which encloses part of the gamma chain. CF(1) is attached to CF(0) by a central stalk formed by the gamma and epsilon chains, while a peripheral stalk is formed by the delta and b chains.

It localises to the cell inner membrane. It carries out the reaction ATP + H2O + 4 H(+)(in) = ADP + phosphate + 5 H(+)(out). Functionally, produces ATP from ADP in the presence of a proton gradient across the membrane. The catalytic sites are hosted primarily by the beta subunits. This is ATP synthase subunit beta from Trichlorobacter lovleyi (strain ATCC BAA-1151 / DSM 17278 / SZ) (Geobacter lovleyi).